Consider the following 1090-residue polypeptide: Aminopeptidase-like protein AC3.5 (1090 aa).

Topologically, residues 1 to 77 (MEDVDLGKDR…KPKKRIACSP (77 aa)) are cytoplasmic. Over residues 21-33 (GNGSASNLNNRNN) the composition is skewed to low complexity. The disordered stretch occupies residues 21–71 (GNGSASNLNNRNNIPLSEKAAKEPLQTQPQEAPPAPKPKVQKQKPPVKPKK). A compositionally biased stretch (basic residues) spans 59-71 (KVQKQKPPVKPKK). A helical; Signal-anchor for type II membrane protein transmembrane segment spans residues 78–98 (GSAICLFLLAVAAIIFAAFLG). Residues 99–1090 (HYLTKQNYEM…DEMESSEEQE (992 aa)) lie on the Lumenal side of the membrane. N-linked (GlcNAc...) asparagine glycosylation is found at Asn115, Asn123, Asn143, Asn176, and Asn230. The interval 217-259 (VTKRAKKSVDSGTNSTSEMPEGSGEEAMATTATTTTTESTTPV) is disordered. Residues 241–257 (EEAMATTATTTTTESTT) show a composition bias toward low complexity. Residues Asn402, Asn710, Asn723, Asn789, Asn894, Asn919, Asn964, and Asn993 are each glycosylated (N-linked (GlcNAc...) asparagine). Over residues 1069–1080 (YLDGKMKGPAKD) the composition is skewed to basic and acidic residues. Residues 1069 to 1090 (YLDGKMKGPAKDDEMESSEEQE) are disordered. Positions 1081–1090 (DEMESSEEQE) are enriched in acidic residues.

This sequence belongs to the peptidase M1 family.

It localises to the membrane. The chain is Aminopeptidase-like protein AC3.5 from Caenorhabditis elegans.